Reading from the N-terminus, the 464-residue chain is Cysteine--tRNA ligase (464 aa).

Cys29 lines the Zn(2+) pocket. Positions 31–41 (ATVQGDPHIGH) match the 'HIGH' region motif. Cys207, His232, and Glu236 together coordinate Zn(2+). A 'KMSKS' region motif is present at residues 263–267 (KMSKS). Lys266 contacts ATP.

This sequence belongs to the class-I aminoacyl-tRNA synthetase family. Monomer. Zn(2+) is required as a cofactor.

The protein resides in the cytoplasm. It catalyses the reaction tRNA(Cys) + L-cysteine + ATP = L-cysteinyl-tRNA(Cys) + AMP + diphosphate. In Rhodococcus opacus (strain B4), this protein is Cysteine--tRNA ligase.